We begin with the raw amino-acid sequence, 496 residues long: Cytochrome P450 71B1 (496 aa).

Cys-436 lines the heme pocket.

It belongs to the cytochrome P450 family. Heme is required as a cofactor.

This is Cytochrome P450 71B1 (CYP71B1) from Thlaspi arvense (Field penny-cress).